A 443-amino-acid chain; its full sequence is Trigger factor (443 aa).

One can recognise a PPIase FKBP-type domain in the interval 161-246; that stretch reads GDKVVIDFQG…IKKIMEGKLP (86 aa).

This sequence belongs to the FKBP-type PPIase family. Tig subfamily.

It is found in the cytoplasm. The catalysed reaction is [protein]-peptidylproline (omega=180) = [protein]-peptidylproline (omega=0). Involved in protein export. Acts as a chaperone by maintaining the newly synthesized protein in an open conformation. Functions as a peptidyl-prolyl cis-trans isomerase. The chain is Trigger factor from Legionella pneumophila subsp. pneumophila (strain Philadelphia 1 / ATCC 33152 / DSM 7513).